We begin with the raw amino-acid sequence, 248 residues long: 14-3-3-like protein 2 (248 aa).

Belongs to the 14-3-3 family. As to quaternary structure, interacts with daf-16. Interacts with sir-2.1. Interacts with hcf-1.

It is found in the cytoplasm. Its subcellular location is the nucleus. Required for extension of lifespan by sir-2.1. Required to modulate lifespan, in concert with hcf-1, acting redundantly with 14-3-3-like protein par-5. Promotes nuclear export of yap-1. Negatively regulates the transcriptional activity of daf-16 by sequestering it to the cytoplasm. The protein is 14-3-3-like protein 2 of Caenorhabditis elegans.